Here is a 132-residue protein sequence, read N- to C-terminus: Small ribosomal subunit protein uS11 (132 aa).

The protein belongs to the universal ribosomal protein uS11 family. As to quaternary structure, part of the 30S ribosomal subunit. Interacts with proteins S7 and S18. Binds to IF-3.

Located on the platform of the 30S subunit, it bridges several disparate RNA helices of the 16S rRNA. Forms part of the Shine-Dalgarno cleft in the 70S ribosome. The sequence is that of Small ribosomal subunit protein uS11 from Legionella pneumophila (strain Paris).